Here is a 428-residue protein sequence, read N- to C-terminus: 26S proteasome regulatory subunit 7 (428 aa).

Residue 211–218 (GPPGTGKT) coordinates ATP.

This sequence belongs to the AAA ATPase family.

The protein resides in the cytoplasm. It localises to the nucleus. In terms of biological role, the 26S proteasome is involved in the ATP-dependent degradation of ubiquitinated proteins. The regulatory (or ATPase) complex confers ATP dependency and substrate specificity to the 26S complex. In Dictyostelium discoideum (Social amoeba), this protein is 26S proteasome regulatory subunit 7 (psmC2).